Reading from the N-terminus, the 1007-residue chain is MPCCLWAALSLLLAVVGAGAWTPPRQPLLLTPRHRRHAQETHHLRLLGWDLKLKENKAIRSPYYKECQFFTGRVLHEEGSAVTVTECDGQLYGLLQVGGEEFVLQPTRTQEKHVLRRRDVTHSERSAEYNLTGDTVIDLDLDFDEDDDLLPTSHVHPRHSDHSDKEYFHDMHLFRRPASGVKGLWLELAIVADNTMLKFHGRERVKHYILALMNIVSAIFNDPSLGSNITLVINKLFLYEDKDIILKYGNIKKSLEAINKWNYRHLMKLPEGSTGWDATIWLTRSQLGGPSGFAPVGGVCTKTRSAAIDRDEGLTSAFVIAHELAHLLGLTHDGEGNCQSEALRGSVMAPTVLATLHNFAWSSCSKEQFHAKSKKWWCLHERSTDEGVELGGAKELSNYVFTMDEQCRTEFGEGFSVCRSVKVRSACSRLWCAHRAMPHVCRSKRAPPLEGTPCGQNQWCVDRVCEPMPGHSKETKVENKHTPEWGDWEEWSACNADCGYGLRTRTRKCKYRGFVSESACEGAGSQVATCWAGSSCAATRDIRSDLCHRQQSRLIPYLHANESNHCEISCVDYAGGSPTNFGALPDGTPCSYLRPFDVCFQGTCVKGQCNSSDTTCNWCPDGYCNNNTNTYTRLLGNGWTRMTMVPHEARQLSIHIATPIPLHIALRERKRDKPILELSKHSKKFDISSLQDNYLKYDPSVPQNLQIVEMDSNILDLKESFRYEGEAITAGTLLRWNQTDTDIYITSESRLQTDLMIMAIPVNPTLEDAVSVDASVNYSTPTGRTRPLEYRWSIERGPCSASCGGGVRLITAQCHRDQKCPPPRYESCNTHSCEFVWASDDWEECSSTCGSNGVQERQLFCVPSNASMLSRREFIKHSVSPVMCSSSKPPHRQPCNRIPCPVYWREQPWTPCSASCGRGVSRRPLTCPASDELLCGPKPRERRRRCRLRRCPSALRVAVQCPERDHAHYCELFTLEQLHRNCEVPPFRKYCCNACRDADRRQHRRYG.

Residues 1–20 (MPCCLWAALSLLLAVVGAGA) form the signal peptide. Residues Asn-130 and Asn-228 are each glycosylated (N-linked (GlcNAc...) asparagine). Residues 184 to 370 (LWLELAIVAD…WSSCSKEQFH (187 aa)) enclose the Peptidase M12B domain. Residue His-322 coordinates Zn(2+). The short motif at 322 to 333 (HELAHLLGLTHD) is the Metal-binding element. Residue Glu-323 is part of the active site. The Zn(2+) site is built by His-326 and His-332. 4 cysteine pairs are disulfide-bonded: Cys-338–Cys-364, Cys-494–Cys-530, Cys-498–Cys-536, and Cys-509–Cys-520. The 56-residue stretch at 482-537 (TPEWGDWEEWSACNADCGYGLRTRTRKCKYRGFVSESACEGAGSQVATCWAGSSCA) folds into the TSP type-1 1 domain. Asn-561, Asn-610, Asn-626, Asn-737, Asn-777, and Asn-865 each carry an N-linked (GlcNAc...) asparagine glycan. 2 consecutive TSP type-1 domains span residues 833 to 899 (CEFV…NRIP) and 900 to 952 (CPVY…RRCP). Intrachain disulfides connect Cys-912–Cys-946, Cys-916–Cys-951, and Cys-927–Cys-935.

The cofactor is Zn(2+).

It localises to the secreted. It is found in the extracellular space. The protein resides in the extracellular matrix. Involved in larval molting and metamorphosis. May degrade extracellular matrix (ECM) and basement membrane (BM) during the development of organs to allow degeneration and remodeling of tissues. This chain is A disintegrin and metalloproteinase with thrombospondin motifs 1, found in Bombyx mori (Silk moth).